A 213-amino-acid polypeptide reads, in one-letter code: Adenylate kinase (213 aa).

Position 10–15 (10–15) interacts with ATP; it reads GAGKGT. The segment at 30–59 is NMP; it reads STGNLLRDEVKSKTDLGVDIEKLISNGKFV. AMP is bound by residues T31, R36, 57 to 59, 85 to 88, and Q92; these read KFV and GYPR. The interval 126–162 is LID; sequence GRMTCEKCNMTLNEYFNKEQIELHPCGVEHLKKRKDD. An ATP-binding site is contributed by R127. Residues R159 and R170 each coordinate AMP. Residue G198 participates in ATP binding.

This sequence belongs to the adenylate kinase family. Monomer.

The protein localises to the cytoplasm. The catalysed reaction is AMP + ATP = 2 ADP. It participates in purine metabolism; AMP biosynthesis via salvage pathway; AMP from ADP: step 1/1. Catalyzes the reversible transfer of the terminal phosphate group between ATP and AMP. Plays an important role in cellular energy homeostasis and in adenine nucleotide metabolism. In Pelagibacter ubique (strain HTCC1062), this protein is Adenylate kinase.